The primary structure comprises 218 residues: Uracil-DNA glycosylase (218 aa).

Asp-59 acts as the Proton acceptor in catalysis.

Belongs to the uracil-DNA glycosylase (UDG) superfamily. UNG family.

It localises to the cytoplasm. It catalyses the reaction Hydrolyzes single-stranded DNA or mismatched double-stranded DNA and polynucleotides, releasing free uracil.. Excises uracil residues from the DNA which can arise as a result of misincorporation of dUMP residues by DNA polymerase or due to deamination of cytosine. In Staphylococcus aureus (strain JH1), this protein is Uracil-DNA glycosylase.